The following is a 515-amino-acid chain: Elongation factor 1-alpha S (515 aa).

The region spanning 5 to 258 is the tr-type G domain; that stretch reads KTHINLVVIG…DAMKPPKRPT (254 aa). The G1 stretch occupies residues 14-21; it reads GHVDAGKS. 14 to 21 serves as a coordination point for GTP; that stretch reads GHVDAGKS. Position 55 is an N6,N6-dimethyllysine (Lys-55). The tract at residues 70–74 is G2; that stretch reads GITID. N6,N6,N6-trimethyllysine is present on Lys-79. The interval 91 to 94 is G3; that stretch reads DAPG. Residues 91-95 and 151-154 contribute to the GTP site; these read DAPGH and NKMD. The G4 stretch occupies residues 151–154; sequence NKMD. The interval 187–206 is disordered; it reads KKDKGDKKKGDKKEKKDKKD. Positions 189-206 are enriched in basic and acidic residues; the sequence is DKGDKKKGDKKEKKDKKD. The G5 stretch occupies residues 222 to 224; that stretch reads SGW. N6-methyllysine is present on Lys-289. Lys-334 bears the N6,N6,N6-trimethyllysine mark. The segment at 396–419 is disordered; that stretch reads KRGKQTHDVSDDTEWATKDDAEPR. Residues 398–419 show a composition bias toward basic and acidic residues; that stretch reads GKQTHDVSDDTEWATKDDAEPR. Lys-441 carries the N6,N6,N6-trimethyllysine modification.

Belongs to the TRAFAC class translation factor GTPase superfamily. Classic translation factor GTPase family. EF-Tu/EF-1A subfamily.

The protein resides in the cytoplasm. Its function is as follows. This protein promotes the GTP-dependent binding of aminoacyl-tRNA to the A-site of ribosomes during protein biosynthesis. The polypeptide is Elongation factor 1-alpha S (TEF-S) (Porphyra purpurea (Red seaweed)).